Consider the following 338-residue polypeptide: Aspartate-semialdehyde dehydrogenase (338 aa).

Residues 13 to 16 (TGNV) and 41 to 42 (NS) contribute to the NADP(+) site. Arginine 101 contributes to the phosphate binding site. Residue cysteine 132 is the Acyl-thioester intermediate of the active site. Position 159 (glutamine 159) interacts with substrate. 162–163 (SG) contributes to the NADP(+) binding site. Residue lysine 216 participates in phosphate binding. Arginine 237 lines the substrate pocket. The active-site Proton acceptor is the histidine 244. Residue asparagine 317 participates in NADP(+) binding.

It belongs to the aspartate-semialdehyde dehydrogenase family. Homodimer.

The enzyme catalyses L-aspartate 4-semialdehyde + phosphate + NADP(+) = 4-phospho-L-aspartate + NADPH + H(+). It functions in the pathway amino-acid biosynthesis; L-lysine biosynthesis via DAP pathway; (S)-tetrahydrodipicolinate from L-aspartate: step 2/4. It participates in amino-acid biosynthesis; L-methionine biosynthesis via de novo pathway; L-homoserine from L-aspartate: step 2/3. Its pathway is amino-acid biosynthesis; L-threonine biosynthesis; L-threonine from L-aspartate: step 2/5. Functionally, catalyzes the NADPH-dependent formation of L-aspartate-semialdehyde (L-ASA) by the reductive dephosphorylation of L-aspartyl-4-phosphate. The protein is Aspartate-semialdehyde dehydrogenase of Rickettsia bellii (strain RML369-C).